The sequence spans 919 residues: Translation initiation factor IF-2 (919 aa).

Over residues 93–107 (MGKALPEEVPEKIAP) the composition is skewed to basic and acidic residues. 2 disordered regions span residues 93-145 (MGKA…PAEP) and 158-279 (KIQP…RKGE). Over residues 136 to 145 (LAPPEKPAEP) the composition is skewed to pro residues. The segment covering 158-171 (KIQPPEKFAEEPLK) has biased composition (basic and acidic residues). Low complexity predominate over residues 172–193 (KPAVIEPEKAAAAPKAVPGEAK). Basic and acidic residues-rich tracts occupy residues 194 to 203 (PLPRTERVQE) and 256 to 279 (GAPK…RKGE). The region spanning 420 to 589 (PRAPVVTIMG…LLQADVLELK (170 aa)) is the tr-type G domain. Positions 429–436 (GHVDHGKT) are G1. 429-436 (GHVDHGKT) lines the GTP pocket. Residues 454-458 (GITQA) form a G2 region. Residues 475 to 478 (DTPG) are G3. Residues 475-479 (DTPGH) and 529-532 (NKID) each bind GTP. A G4 region spans residues 529 to 532 (NKID). The interval 565-567 (SAK) is G5.

Belongs to the TRAFAC class translation factor GTPase superfamily. Classic translation factor GTPase family. IF-2 subfamily.

It localises to the cytoplasm. In terms of biological role, one of the essential components for the initiation of protein synthesis. Protects formylmethionyl-tRNA from spontaneous hydrolysis and promotes its binding to the 30S ribosomal subunits. Also involved in the hydrolysis of GTP during the formation of the 70S ribosomal complex. In Syntrophus aciditrophicus (strain SB), this protein is Translation initiation factor IF-2.